A 106-amino-acid chain; its full sequence is Urease subunit beta (106 aa).

The protein belongs to the urease beta subunit family. As to quaternary structure, heterotrimer of UreA (gamma), UreB (beta) and UreC (alpha) subunits. Three heterotrimers associate to form the active enzyme. The apoenzyme interacts with an accessory complex composed of UreD, UreF and UreG, which is required for the assembly of the nickel containing metallocenter of UreC. The UreE protein may also play a direct role as a metallochaperone in nickel transfer to the urease apoprotein.

It is found in the cytoplasm. It catalyses the reaction urea + 2 H2O + H(+) = hydrogencarbonate + 2 NH4(+). It participates in nitrogen metabolism; urea degradation; CO(2) and NH(3) from urea (urease route): step 1/1. Its activity is regulated as follows. The apoenzyme can be activated in vitro in the presence of nickel ions and carbon dioxide, which promotes carboxylation of 'Lys-217' of the UreC (alpha) subunit. This Klebsiella aerogenes (Enterobacter aerogenes) protein is Urease subunit beta.